We begin with the raw amino-acid sequence, 146 residues long: Ribonuclease H (146 aa).

Residues 1–143 enclose the RNase H type-1 domain; that stretch reads MQKKIIVYTD…CDELARQAIK (143 aa). Mg(2+)-binding residues include D10, E48, D70, and D135.

Belongs to the RNase H family. In terms of assembly, monomer. It depends on Mg(2+) as a cofactor.

It localises to the cytoplasm. The catalysed reaction is Endonucleolytic cleavage to 5'-phosphomonoester.. In terms of biological role, endonuclease that specifically degrades the RNA of RNA-DNA hybrids. This chain is Ribonuclease H, found in Chlorobium phaeobacteroides (strain DSM 266 / SMG 266 / 2430).